The following is a 229-amino-acid chain: Protein-lysine N-methyltransferase EFM4 (229 aa).

The protein belongs to the class I-like SAM-binding methyltransferase superfamily. EFM4 family.

Its subcellular location is the cytoplasm. The catalysed reaction is L-lysyl-[protein] + S-adenosyl-L-methionine = N(6)-methyl-L-lysyl-[protein] + S-adenosyl-L-homocysteine + H(+). It carries out the reaction N(6)-methyl-L-lysyl-[protein] + S-adenosyl-L-methionine = N(6),N(6)-dimethyl-L-lysyl-[protein] + S-adenosyl-L-homocysteine + H(+). Its function is as follows. S-adenosyl-L-methionine-dependent protein-lysine N-methyltransferase that mono- and dimethylates elongation factor 1-alpha (TEF1 and TEF2) at 'Lys-316'. May play a role in intracellular transport. The sequence is that of Protein-lysine N-methyltransferase EFM4 from Saccharomyces cerevisiae (strain ATCC 204508 / S288c) (Baker's yeast).